Consider the following 364-residue polypeptide: Aminomethyltransferase (364 aa).

This sequence belongs to the GcvT family. In terms of assembly, the glycine cleavage system is composed of four proteins: P, T, L and H.

The enzyme catalyses N(6)-[(R)-S(8)-aminomethyldihydrolipoyl]-L-lysyl-[protein] + (6S)-5,6,7,8-tetrahydrofolate = N(6)-[(R)-dihydrolipoyl]-L-lysyl-[protein] + (6R)-5,10-methylene-5,6,7,8-tetrahydrofolate + NH4(+). Functionally, the glycine cleavage system catalyzes the degradation of glycine. This chain is Aminomethyltransferase, found in Shewanella piezotolerans (strain WP3 / JCM 13877).